The chain runs to 796 residues: Protein translocase subunit SecA 2 (796 aa).

ATP-binding positions include Q84, 102–106 (GEGKT), and D496.

The protein belongs to the SecA family. In terms of assembly, monomer and homodimer. Part of the essential Sec protein translocation apparatus which comprises SecA, SecYEG and auxiliary proteins SecDF. Other proteins may also be involved.

It localises to the cell membrane. The protein resides in the cytoplasm. It carries out the reaction ATP + H2O + cellular proteinSide 1 = ADP + phosphate + cellular proteinSide 2.. Part of the Sec protein translocase complex. Interacts with the SecYEG preprotein conducting channel. Has a central role in coupling the hydrolysis of ATP to the transfer of proteins into and across the cell membrane, serving as an ATP-driven molecular motor driving the stepwise translocation of polypeptide chains across the membrane. The chain is Protein translocase subunit SecA 2 from Staphylococcus aureus (strain MSSA476).